A 207-amino-acid polypeptide reads, in one-letter code: Shikimate kinase (207 aa).

Gly32–Thr37 is a binding site for ATP. Ser36 is a Mg(2+) binding site. Substrate-binding residues include Asp54, Arg78, and Gly100. Position 138 (Arg138) interacts with ATP. Arg157 provides a ligand contact to substrate.

The protein belongs to the shikimate kinase family. Monomer. It depends on Mg(2+) as a cofactor.

It is found in the cytoplasm. The catalysed reaction is shikimate + ATP = 3-phosphoshikimate + ADP + H(+). It participates in metabolic intermediate biosynthesis; chorismate biosynthesis; chorismate from D-erythrose 4-phosphate and phosphoenolpyruvate: step 5/7. In terms of biological role, catalyzes the specific phosphorylation of the 3-hydroxyl group of shikimic acid using ATP as a cosubstrate. The chain is Shikimate kinase from Bradyrhizobium diazoefficiens (strain JCM 10833 / BCRC 13528 / IAM 13628 / NBRC 14792 / USDA 110).